Consider the following 416-residue polypeptide: Imidazolonepropionase (416 aa).

Residues histidine 78 and histidine 80 each coordinate Fe(3+). Residues histidine 78 and histidine 80 each coordinate Zn(2+). 4-imidazolone-5-propanoate-binding residues include arginine 87, tyrosine 150, and histidine 183. An N-formimidoyl-L-glutamate-binding site is contributed by tyrosine 150. Histidine 248 lines the Fe(3+) pocket. Residue histidine 248 coordinates Zn(2+). Glutamine 251 contributes to the 4-imidazolone-5-propanoate binding site. Position 323 (aspartate 323) interacts with Fe(3+). Aspartate 323 contacts Zn(2+). 2 residues coordinate N-formimidoyl-L-glutamate: asparagine 325 and glycine 327. Threonine 328 is a 4-imidazolone-5-propanoate binding site.

Belongs to the metallo-dependent hydrolases superfamily. HutI family. It depends on Zn(2+) as a cofactor. The cofactor is Fe(3+).

It localises to the cytoplasm. The catalysed reaction is 4-imidazolone-5-propanoate + H2O = N-formimidoyl-L-glutamate. It participates in amino-acid degradation; L-histidine degradation into L-glutamate; N-formimidoyl-L-glutamate from L-histidine: step 3/3. Catalyzes the hydrolytic cleavage of the carbon-nitrogen bond in imidazolone-5-propanoate to yield N-formimidoyl-L-glutamate. It is the third step in the universal histidine degradation pathway. The chain is Imidazolonepropionase from Vibrio parahaemolyticus serotype O3:K6 (strain RIMD 2210633).